The following is a 302-amino-acid chain: Oxaloacetate decarboxylase 2 (302 aa).

Residue serine 50 participates in substrate binding. Residue aspartate 88 coordinates Mg(2+). Substrate-binding residues include arginine 159 and histidine 235.

It belongs to the isocitrate lyase/PEP mutase superfamily. Oxaloacetate decarboxylase family. As to quaternary structure, homotetramer; dimer of dimers. Requires Mg(2+) as cofactor.

The enzyme catalyses oxaloacetate + H(+) = pyruvate + CO2. Its function is as follows. Catalyzes the decarboxylation of oxaloacetate into pyruvate. Seems to play a role in maintaining cellular concentrations of bicarbonate and pyruvate. The polypeptide is Oxaloacetate decarboxylase 2 (Pseudomonas putida (strain W619)).